The primary structure comprises 100 residues: Nucleoid-associated protein jhp_0031 (100 aa).

It belongs to the YbaB/EbfC family. In terms of assembly, homodimer.

It localises to the cytoplasm. It is found in the nucleoid. In terms of biological role, binds to DNA and alters its conformation. May be involved in regulation of gene expression, nucleoid organization and DNA protection. The sequence is that of Nucleoid-associated protein jhp_0031 from Helicobacter pylori (strain J99 / ATCC 700824) (Campylobacter pylori J99).